A 350-amino-acid chain; its full sequence is Induced myeloid leukemia cell differentiation protein Mcl-1 homolog (350 aa).

Lysine 5 is covalently cross-linked (Glycyl lysine isopeptide (Lys-Gly) (interchain with G-Cter in ubiquitin)). A disordered region spans residues 23–95 (AGSGGASSSG…GPNVSATPPR (73 aa)). Residues 31-41 (SGGRLLASGRE) show a composition bias toward low complexity. The segment covering 50-61 (GGEAGAVIGGSA) has biased composition (gly residues). The PEST-like stretch occupies residues 104-175 (RASPPEEMEG…PAEEEEDELY (72 aa)). Serine 121 is modified (phosphoserine). A Glycyl lysine isopeptide (Lys-Gly) (interchain with G-Cter in ubiquitin) cross-link involves residue lysine 136. The tract at residues 150-169 (ASSGPGMDGSLPSTPPPAEE) is disordered. Residue serine 159 is modified to Phosphoserine; by GSK3-alpha and GSK3-beta. The residue at position 162 (serine 162) is a Phosphoserine. At threonine 163 the chain carries Phosphothreonine. Residues lysine 194 and lysine 197 each participate in a glycyl lysine isopeptide (Lys-Gly) (interchain with G-Cter in ubiquitin) cross-link. The short motif at 209–223 (ALETLQRVGDGVQRN) is the BH3 element. The BH1 motif lies at 252–272 (HVFSDGVTNWGRIVTLISFGA). The BH2 motif lies at 304–319 (DWLVKQRGWDGFVEFF). The chain crosses the membrane as a helical span at residues 327–349 (GIRNVLLAFAGVAGVGAGLAYLI).

Belongs to the Bcl-2 family. As to quaternary structure, interacts with HIF3A (via C-terminus domain). Interacts with BOK, BIK, BAX, BAK1, and TPT1. Interacts with unphosphorylated BAD. Interacts with BMF, BBC3 and PMAIP1. Interacts with BOP. Interacts with BCL2L11; may sequester BCL2L11 to prevent its pro-apoptotic activity. Interacts with GIMAP5 and HSPA8/HSC70; the interaction between HSPA8 and MCL1 is impaired in the absence of GIMAP5. Post-translationally, cleaved by CASP3 during apoptosis, yielding a pro-apoptotic C-terminal fragment. In terms of processing, rapidly degraded in the absence of phosphorylation in the PEST region. Phosphorylated on Ser-159, by GSK3, in response to IL3/interleukin-3 withdrawal. Phosphorylation at Ser-159 induces ubiquitination and proteasomal degradation, abrogating the anti-apoptotic activity. Treatment with taxol or okadaic acid induces phosphorylation on additional sites. Post-translationally, ubiquitinated. Ubiquitination is induced by phosphorylation at Ser-159. Deubiquitinated by USP20; leading to increased stability. In terms of tissue distribution, detected in peripheral blood mononuclear cells and bone marrow.

The protein resides in the membrane. It is found in the cytoplasm. Its subcellular location is the mitochondrion. It localises to the nucleus. The protein localises to the nucleoplasm. In terms of biological role, involved in the regulation of apoptosis versus cell survival, and in the maintenance of viability but not of proliferation. Mediates its effects by interactions with a number of other regulators of apoptosis. The chain is Induced myeloid leukemia cell differentiation protein Mcl-1 homolog (MCL1) from Canis lupus familiaris (Dog).